The chain runs to 696 residues: MARDFSLDRTRNIGIMAHIDAGKTTTTERILYYTGRIHKIGETHEGASQMDWMEQEQDRGITITSAATTAEWDNHRVNIIDTPGHVDFTVEVERSLRVLDGAVTVLDAQSGVEPQTETVWRQATTYGVPRIVFVNKMDKLGANFEYSVSTIHDRLQANAQPIQLPIGAEDEFEAIIDLVEMTCFKYTNDLGTEIEEIEIPEDHKERAEEARAALVEAVAETDDELMEKYLGDEEISIPELKAAIRKATTDVEFYPVLVGTAFKNKGVQLMLNAVIDYLPSPLDVKPIIGHRADNPDEEVIAKADDNAEFAALAFKVMTDPYVGKLTFFRVYSGTLSSGSYVKNSTKNKRERVGRLLQMHANSRQELNTVYSGDIAAAVGLKDTGTGDTLCGEKNDIILESMDFPEPVIHLSVEPKSKADQDKMTTALVKLQEEDPTFHAHTDDETGQVIIGGMGELHLDILVDRMKKEFNVECNVGAPMVSYRETFKSSAEVQGKFARQSGGRGQYGDVKIEFSPNETGGGFEFENAIVGGVVPREYIPSVEAGLKDSMENGVLAGYPLIDVKARLFDGSYHDVDSSEMAFKVAASLALKEAAKKCDPVILEPMMKVTIEMPEEYMGDIMGDVTSRRGRVDGMEPRGNAQVVNAYVPLSEMFGYATSLRSNTQGRGTYTMYFDHYAEVPKSIAEDIIKKNSGNKAE.

A tr-type G domain is found at 8 to 282 (DRTRNIGIMA…AVIDYLPSPL (275 aa)). Residues 17–24 (AHIDAGKT), 81–85 (DTPGH), and 135–138 (NKMD) each bind GTP.

It belongs to the TRAFAC class translation factor GTPase superfamily. Classic translation factor GTPase family. EF-G/EF-2 subfamily.

The protein resides in the cytoplasm. Functionally, catalyzes the GTP-dependent ribosomal translocation step during translation elongation. During this step, the ribosome changes from the pre-translocational (PRE) to the post-translocational (POST) state as the newly formed A-site-bound peptidyl-tRNA and P-site-bound deacylated tRNA move to the P and E sites, respectively. Catalyzes the coordinated movement of the two tRNA molecules, the mRNA and conformational changes in the ribosome. The polypeptide is Elongation factor G (Staphylococcus saprophyticus subsp. saprophyticus (strain ATCC 15305 / DSM 20229 / NCIMB 8711 / NCTC 7292 / S-41)).